The primary structure comprises 240 residues: 1-acyl-sn-glycerol-3-phosphate acyltransferase (240 aa).

Positions 73 to 78 match the HXXXXD motif motif; the sequence is HQNNYD.

Belongs to the 1-acyl-sn-glycerol-3-phosphate acyltransferase family.

The protein localises to the cell inner membrane. The enzyme catalyses a 1-acyl-sn-glycero-3-phosphate + an acyl-CoA = a 1,2-diacyl-sn-glycero-3-phosphate + CoA. It participates in phospholipid metabolism; CDP-diacylglycerol biosynthesis; CDP-diacylglycerol from sn-glycerol 3-phosphate: step 2/3. In terms of biological role, converts lysophosphatidic acid (LPA) into phosphatidic acid by incorporating acyl moiety at the 2 position. The sequence is that of 1-acyl-sn-glycerol-3-phosphate acyltransferase (plsC) from Haemophilus influenzae (strain ATCC 51907 / DSM 11121 / KW20 / Rd).